A 258-amino-acid chain; its full sequence is Thiazole synthase (258 aa).

Lysine 97 functions as the Schiff-base intermediate with DXP in the catalytic mechanism. Residues glycine 158, 184 to 185 (AG), and 206 to 207 (NT) each bind 1-deoxy-D-xylulose 5-phosphate.

This sequence belongs to the ThiG family. As to quaternary structure, homotetramer. Forms heterodimers with either ThiH or ThiS.

Its subcellular location is the cytoplasm. It catalyses the reaction [ThiS sulfur-carrier protein]-C-terminal-Gly-aminoethanethioate + 2-iminoacetate + 1-deoxy-D-xylulose 5-phosphate = [ThiS sulfur-carrier protein]-C-terminal Gly-Gly + 2-[(2R,5Z)-2-carboxy-4-methylthiazol-5(2H)-ylidene]ethyl phosphate + 2 H2O + H(+). The protein operates within cofactor biosynthesis; thiamine diphosphate biosynthesis. Functionally, catalyzes the rearrangement of 1-deoxy-D-xylulose 5-phosphate (DXP) to produce the thiazole phosphate moiety of thiamine. Sulfur is provided by the thiocarboxylate moiety of the carrier protein ThiS. In vitro, sulfur can be provided by H(2)S. The sequence is that of Thiazole synthase from Bacteroides fragilis (strain ATCC 25285 / DSM 2151 / CCUG 4856 / JCM 11019 / LMG 10263 / NCTC 9343 / Onslow / VPI 2553 / EN-2).